The following is a 93-amino-acid chain: MARSLKKGPFVDDHVMKKVIAAKNANDNKPIKTWSRRSTIVPEMIGLTFNVHNGKSFIPVYVTENHIGYKLGEFAPTRTFKGHKGSVQKKIGK.

It belongs to the universal ribosomal protein uS19 family.

Its function is as follows. Protein S19 forms a complex with S13 that binds strongly to the 16S ribosomal RNA. The chain is Small ribosomal subunit protein uS19 from Campylobacter concisus (strain 13826).